The primary structure comprises 125 residues: DNA-directed RNA polymerase II subunit RPB9 (125 aa).

Position 1 is an N-acetylmethionine (Met-1). Residues Cys-17, Cys-20, Cys-39, Cys-42, Cys-86, Cys-89, Cys-114, and Cys-119 each coordinate Zn(2+). The C4-type zinc finger occupies 17–42 (CQECNNMLYPKEDKENRILLYACRNC). A TFIIS-type zinc finger spans residues 82–124 (EDHPCQKCGHKEAVFFQSHSARAEDAMRLYYVCTAPHCGHRWT).

This sequence belongs to the archaeal RpoM/eukaryotic RPA12/RPB9/RPC11 RNA polymerase family. Component of the RNA polymerase II (Pol II) core complex consisting of 12 subunits: a ten-subunit catalytic core composed of POLR2A/RPB1, POLR2B/RPB2, POLR2C/RPB3, POLR2I/RPB9, POLR2J/RPB11, POLR2E/RPABC1, POLR2F/RPABC2, POLR2H/RPABC3, POLR2K/RPABC4 and POLR2L/RPABC5 and a mobile stalk composed of two subunits POLR2D/RPB4 and POLR2G/RPB7, protruding from the core and functioning primarily in transcription initiation. Part of Pol II(G) complex, in which Pol II core associates with an additional subunit POLR2M; unlike conventional Pol II, Pol II(G) functions as a transcriptional repressor. Part of TBP-based Pol II pre-initiation complex (PIC), in which Pol II core assembles with general transcription factors and other specific initiation factors including GTF2E1, GTF2E2, GTF2F1, GTF2F2, TCEA1, ERCC2, ERCC3, GTF2H2, GTF2H3, GTF2H4, GTF2H5, GTF2A1, GTF2A2, GTF2B and TBP; this large multi-subunit PIC complex mediates DNA unwinding and targets Pol II core to the transcription start site where the first phosphodiester bond forms.

The protein resides in the nucleus. Its subcellular location is the nucleolus. Its function is as follows. DNA-dependent RNA polymerase catalyzes the transcription of DNA into RNA using the four ribonucleoside triphosphates as substrates. Component of RNA polymerase II which synthesizes mRNA precursors and many functional non-coding RNAs. Pol II is the central component of the basal RNA polymerase II transcription machinery. It is composed of mobile elements that move relative to each other. POLR2I/RPB9 is part of the upper jaw surrounding the central large cleft and thought to grab the incoming DNA template. This is DNA-directed RNA polymerase II subunit RPB9 (POLR2I) from Bos taurus (Bovine).